The following is a 437-amino-acid chain: GTPase Der (437 aa).

EngA-type G domains follow at residues 3-167 (ALVA…PAEN) and 177-353 (PRIA…AHRS). Residues 9 to 16 (GRPNVGKS), 56 to 60 (DTGGW), 119 to 122 (NKVD), 183 to 190 (GRPNAGKS), 230 to 234 (DTAGI), and 295 to 298 (NKWD) each bind GTP. The region spanning 354 to 437 (TRIPTHKLNE…TPINIFIREK (84 aa)) is the KH-like domain.

It belongs to the TRAFAC class TrmE-Era-EngA-EngB-Septin-like GTPase superfamily. EngA (Der) GTPase family. Associates with the 50S ribosomal subunit.

GTPase that plays an essential role in the late steps of ribosome biogenesis. This is GTPase Der from Porphyromonas gingivalis (strain ATCC BAA-308 / W83).